A 494-amino-acid chain; its full sequence is Poly(3-hydroxybutyrate) depolymerase (494 aa).

A signal peptide spans 1 to 25 (MAFNFIRAAAAGAAMALCGVGSVHA). S45 (nucleophile) is an active-site residue. Residues D132 and H166 each act as charge relay system in the active site. In terms of domain architecture, Fibronectin type-III spans 347–431 (APTGVSTSGA…AAASGTTLAA (85 aa)).

This sequence belongs to the AB hydrolase superfamily. Lipase family.

It localises to the secreted. It catalyses the reaction [(3R)-hydroxybutanoate](n) + H2O = [(3R)-hydroxybutanoate](n-2) + (3R)-hydroxybutanoate dimer + H(+). It carries out the reaction [(3R)-hydroxybutanoate](n) + H2O = [(3R)-hydroxybutanoate](n-1) + (R)-3-hydroxybutanoate + H(+). The enzyme catalyses (3R)-hydroxybutanoate dimer + H2O = 2 (R)-3-hydroxybutanoate + H(+). Its function is as follows. Catalyzes the hydrolysis of poly(3-hydroxybutyrate) (PHB) film, producing the monomer and dimer of 3-hydroxybutyrate (3HB), while the 3HB trimer and tetramer are not formed. The protein is Poly(3-hydroxybutyrate) depolymerase of Delftia acidovorans (Pseudomonas acidovorans).